A 315-amino-acid polypeptide reads, in one-letter code: Shiga-like toxin 1 subunit A (315 aa).

The signal sequence occupies residues 1-22 (MKIIIFRVLTFFFVIFSVNVVA). The interval 23-273 (KEFTLDFSTA…CHHHASRVAR (251 aa)) is A1. Glu-189 is a catalytic residue. An intrachain disulfide couples Cys-264 to Cys-283. Residues 274–315 (MASDEFPSMCPADGRVRGITHNKILWDSSTLGAILMRRTISS) form an A2 region.

Belongs to the ribosome-inactivating protein family. In terms of assembly, shiga-like toxin contains a single subunit A and five copies of subunit B.

It is found in the secreted. The enzyme catalyses Endohydrolysis of the N-glycosidic bond at one specific adenosine on the 28S rRNA.. The A subunit is responsible for inhibiting protein synthesis through the catalytic inactivation of 60S ribosomal subunits. After endocytosis, the A subunit is cleaved by furin in two fragments, A1 and A2: A1 is the catalytically active fragment, and A2 is essential for holotoxin assembly with the B subunits. This Escherichia coli (Bacteriophage H19B) protein is Shiga-like toxin 1 subunit A (stxA).